The chain runs to 4660 residues: Low-density lipoprotein receptor-related protein 2 (4660 aa).

The signal sequence occupies residues 1–25 (MERGAAAAAWMLLLAIAACLAPVSG). Topologically, residues 26 to 4425 (QECGSGNFRC…LSRGIPPGTT (4400 aa)) are extracellular. LDL-receptor class A domains lie at 27 to 63 (ECGS…IGCP), 66 to 104 (SCGS…QNCP), 107 to 143 (TCSS…RNCY), 146 to 180 (TCDQ…ANCT), 182 to 218 (LCSQ…HNCN), 221 to 257 (TCGG…DGCE), and 264 to 307 (TCYP…RYCG). 21 disulfides stabilise this stretch: Cys-28–Cys-40, Cys-35–Cys-53, Cys-47–Cys-62, Cys-67–Cys-80, Cys-74–Cys-93, Cys-87–Cys-103, Cys-108–Cys-120, Cys-115–Cys-133, Cys-127–Cys-142, Cys-147–Cys-157, Cys-152–Cys-170, Cys-164–Cys-179, Cys-183–Cys-195, Cys-190–Cys-208, Cys-202–Cys-217, Cys-222–Cys-234, Cys-229–Cys-247, Cys-241–Cys-256, Cys-265–Cys-278, Cys-272–Cys-291, and Cys-285–Cys-306. Asn-159 and Asn-178 each carry an N-linked (GlcNAc...) asparagine glycan. 4 N-linked (GlcNAc...) asparagine glycosylation sites follow: Asn-299, Asn-340, Asn-387, and Asn-462. 4 LDL-receptor class B repeats span residues 435–477 (HRVF…DWIN), 478–520 (NKLY…DPTV), 521–567 (GYLF…DLVS), and 568–612 (KRVY…FEEH). N-linked (GlcNAc...) asparagine glycosylation occurs at Asn-657. LDL-receptor class B repeat units follow at residues 752-794 (STIF…DWIS), 795-836 (RNLY…HPAA), 837-880 (GYMF…DWST), and 881-924 (SRLY…FKDN). Asn-865 carries N-linked (GlcNAc...) asparagine glycosylation. Positions 1024-1060 (QCGSSSFPCNNGKCVPSIFRCDGVDDCHDNSDEHQCG) constitute an LDL-receptor class A 8 domain. 3 disulfide bridges follow: Cys-1025–Cys-1037, Cys-1032–Cys-1050, and Cys-1044–Cys-1059. The N-linked (GlcNAc...) asparagine glycan is linked to Asn-1063. 7 LDL-receptor class A domains span residues 1065–1102 (TCSS…QNCP), 1109–1145 (TCPP…KNCQ), 1149–1185 (TCHP…AGCV), 1187–1224 (NCTS…AGCP), 1230–1268 (MCHP…NGCV), 1271–1307 (TCSP…KDCP), and 1312–1350 (HCPS…PLCN). 9 disulfides stabilise this stretch: Cys-1066–Cys-1079, Cys-1073–Cys-1092, Cys-1086–Cys-1101, Cys-1110–Cys-1122, Cys-1117–Cys-1135, Cys-1129–Cys-1144, Cys-1150–Cys-1162, Cys-1157–Cys-1175, and Cys-1169–Cys-1184. Ca(2+) contacts are provided by Trp-1127, Asp-1130, Asp-1132, Asp-1134, Asp-1140, and Glu-1141. Asn-1187 carries an N-linked (GlcNAc...) asparagine glycan. 18 disulfide bridges follow: Cys-1188–Cys-1201, Cys-1195–Cys-1214, Cys-1208–Cys-1223, Cys-1231–Cys-1244, Cys-1238–Cys-1257, Cys-1251–Cys-1267, Cys-1272–Cys-1284, Cys-1279–Cys-1297, Cys-1291–Cys-1306, Cys-1313–Cys-1326, Cys-1320–Cys-1339, Cys-1333–Cys-1349, Cys-1354–Cys-1365, Cys-1361–Cys-1374, Cys-1376–Cys-1389, Cys-1395–Cys-1405, Cys-1401–Cys-1414, and Cys-1416–Cys-1429. Ca(2+)-binding residues include Tyr-1206, Asp-1209, Val-1211, Asp-1213, Asp-1219, and Glu-1220. 2 N-linked (GlcNAc...) asparagine glycosylation sites follow: Asn-1328 and Asn-1341. Residues 1350-1390 (NQDSCLHFNGGCTHRCIQGPFGATCVCPIGYQLANDTKTCE) form the EGF-like 1 domain. Asn-1384 carries an N-linked (GlcNAc...) asparagine glycan. The EGF-like 2; calcium-binding domain occupies 1391 to 1430 (DVNECDIPGFCSQHCVNMRGSFRCACDPEYTLESDGRTCK). Asn-1451, Asn-1497, and Asn-1551 each carry an N-linked (GlcNAc...) asparagine glycan. LDL-receptor class B repeat units follow at residues 1479–1521 (GRVF…DWIG), 1522–1564 (RNIY…DPRM), 1567–1610 (NVMF…DYPN), 1611–1655 (RLIY…FEDS), and 1656–1696 (VFWT…IHPS). N-linked (GlcNAc...) asparagine glycosylation is found at Asn-1676, Asn-1733, and Asn-1811. 10 LDL-receptor class B repeats span residues 1791–1833 (QFIY…DWVS), 1834–1883 (RNIY…DPAR), 1884–1931 (GKLY…DIQE), 1932–1973 (QKLY…HGSF), 1974–2014 (LYYS…YHHR), 2108–2157 (GFIY…DWVA), 2158–2202 (GNLY…DPKH), 2203–2246 (RYLF…DHDT), 2247–2290 (GYIY…FGES), and 2291–2333 (IIWV…FDEH). Residues Asn-2131, Asn-2134, Asn-2178, and Asn-2225 are each glycosylated (N-linked (GlcNAc...) asparagine). The N-linked (GlcNAc...) asparagine glycan is linked to Asn-2396. LDL-receptor class B repeat units follow at residues 2432 to 2478 (NRIF…DWIN), 2479 to 2519 (RRIY…DPCR), 2520 to 2563 (GYMY…DLET), 2564 to 2605 (DLLY…YGQY), and 2606 to 2647 (IYWT…VVKT). N-linked (GlcNAc...) asparagine glycans are attached at residues Asn-2488 and Asn-2548. LDL-receptor class A domains lie at 2700–2738 (RCNQ…TVCA), 2741–2777 (TCRS…AGCL), 2780–2819 (SCNS…KNCP), 2822–2861 (TCQP…IYCA), 2864–2902 (TCRS…DTCG), 2907–2946 (SCSA…HHCE), 2949–2991 (NCSS…QNCT), 2994–3030 (ACST…RGCS), 3033–3071 (PCRD…HLCH), and 3076–3112 (TCPP…KGCG). 18 disulfide bridges follow: Cys-2701/Cys-2713, Cys-2708/Cys-2726, Cys-2720/Cys-2737, Cys-2742/Cys-2754, Cys-2749/Cys-2767, Cys-2761/Cys-2776, Cys-2781/Cys-2794, Cys-2789/Cys-2807, Cys-2801/Cys-2818, Cys-2823/Cys-2836, Cys-2830/Cys-2849, Cys-2843/Cys-2860, Cys-2865/Cys-2878, Cys-2872/Cys-2891, Cys-2885/Cys-2901, Cys-2908/Cys-2920, Cys-2915/Cys-2933, and Cys-2927/Cys-2945. The N-linked (GlcNAc...) asparagine glycan is linked to Asn-2782. A glycan (N-linked (GlcNAc...) asparagine) is linked at Asn-2810. Asn-2949 is a glycosylation site (N-linked (GlcNAc...) asparagine). Disulfide bonds link Cys-2950/Cys-2967, Cys-2957/Cys-2980, Cys-2974/Cys-2990, Cys-2995/Cys-3007, Cys-3002/Cys-3020, Cys-3014/Cys-3029, Cys-3034/Cys-3046, Cys-3041/Cys-3059, Cys-3053/Cys-3070, Cys-3077/Cys-3089, Cys-3084/Cys-3102, Cys-3096/Cys-3111, Cys-3116/Cys-3128, Cys-3124/Cys-3137, Cys-3139/Cys-3152, Cys-3158/Cys-3169, Cys-3165/Cys-3178, and Cys-3180/Cys-3193. Asn-2989 is a glycosylation site (N-linked (GlcNAc...) asparagine). The region spanning 3112–3153 (GINECQDSSISHCDHNCTDTITSFYCSCLPGYKLMSDKRTCV) is the EGF-like 3 domain. Asn-3127 carries an N-linked (GlcNAc...) asparagine glycan. The EGF-like 4; calcium-binding domain maps to 3154-3194 (DIDECKETPQLCSQKCENVIGSYICKCAPGYIREPDGKSCR). N-linked (GlcNAc...) asparagine glycans are attached at residues Asn-3213, Asn-3259, Asn-3317, and Asn-3357. 5 LDL-receptor class B repeats span residues 3241–3283 (ERLY…DWVS), 3284–3326 (RKLY…ENPR), 3335–3378 (GYVY…DYTN), 3379–3421 (DLLY…FEDT), and 3422–3462 (VFWT…LHPY). A glycan (N-linked (GlcNAc...) asparagine) is linked at Asn-3448. LDL-receptor class A domains follow at residues 3513–3551 (MCSS…DLCP), 3554–3592 (FCRL…VLCE), 3595–3633 (RCEA…SHCA), 3636–3674 (TCRP…HECM), 3679–3717 (NCDN…QGCE), 3720–3757 (PCHP…ESCV), 3760–3796 (ECTE…RDCE), and 3799–3835 (TCHP…SACP). Cystine bridges form between Cys-3514-Cys-3527, Cys-3521-Cys-3540, Cys-3534-Cys-3550, Cys-3555-Cys-3567, Cys-3562-Cys-3580, Cys-3574-Cys-3591, Cys-3596-Cys-3608, Cys-3603-Cys-3621, Cys-3615-Cys-3632, Cys-3637-Cys-3649, Cys-3644-Cys-3662, Cys-3656-Cys-3673, Cys-3680-Cys-3694, Cys-3688-Cys-3707, Cys-3701-Cys-3716, Cys-3721-Cys-3734, Cys-3729-Cys-3747, Cys-3741-Cys-3756, Cys-3761-Cys-3773, Cys-3768-Cys-3786, Cys-3780-Cys-3795, Cys-3800-Cys-3812, Cys-3807-Cys-3825, and Cys-3819-Cys-3834. An N-linked (GlcNAc...) asparagine glycan is attached at Asn-3566. N-linked (GlcNAc...) asparagine glycosylation is present at Asn-3682. Asn-3840 carries N-linked (GlcNAc...) asparagine glycosylation. LDL-receptor class A domains are found at residues 3843–3881 (YCPA…HLCF), 3884–3923 (PCES…EHCR), and 3929–3965 (PCTD…TGCN). 9 disulfide bridges follow: Cys-3844-Cys-3856, Cys-3851-Cys-3869, Cys-3863-Cys-3880, Cys-3885-Cys-3898, Cys-3893-Cys-3911, Cys-3905-Cys-3922, Cys-3930-Cys-3942, Cys-3937-Cys-3955, and Cys-3949-Cys-3964. 2 N-linked (GlcNAc...) asparagine glycosylation sites follow: Asn-3969 and Asn-3980. The EGF-like 5; calcium-binding domain maps to 4009–4050 (DINECEEFGICPQSCRNSKGSYECFCVDGFKSMSTHYGERCA). Disulfide bonds link Cys-4013–Cys-4023, Cys-4019–Cys-4032, and Cys-4034–Cys-4049. Asn-4070 carries N-linked (GlcNAc...) asparagine glycosylation. 3 LDL-receptor class B repeats span residues 4156-4198 (RHIY…NPKL), 4199-4242 (GLMF…DYLN), and 4244-4285 (DRIY…FEDQ). A glycan (N-linked (GlcNAc...) asparagine) is linked at Asn-4329. The EGF-like 6 domain maps to 4379–4413 (MPSPCRCMHGGSCYFDENDLPKCKCSSGYSGEYCE). 3 cysteine pairs are disulfide-bonded: Cys-4383–Cys-4391, Cys-4385–Cys-4401, and Cys-4403–Cys-4412. The helical transmembrane segment at 4426 to 4446 (MALLLTFAMVIIVGALVLVGF) threads the bilayer. Over 4447–4660 (FHYRKTGSLL…ANLVKEDSDV (214 aa)) the chain is Cytoplasmic. Residues 4454 to 4463 (SLLPSLPKLP) carry the SH3-binding motif. The PxLPxI/L motif 1; mediates interaction with ANKRA2 motif lies at 4457 to 4462 (PSLPKL). The PxLPxI/L motif 2; mediates interaction with ANKRA2 motif lies at 4460–4465 (PKLPSL). Phosphoserine occurs at positions 4464 and 4467. An Endocytosis signal motif is present at residues 4522–4527 (FENPMY). The segment at 4558-4660 (QNYGRSIDPS…ANLVKEDSDV (103 aa)) is disordered. Phosphoserine is present on Ser-4577. Positions 4597–4610 (QTTNFENPIYAEMD) are interaction with DAB2. Residues 4603–4606 (NPIY) carry the NPXY motif motif. The short motif at 4606-4609 (YAEM) is the SH2-binding element. Positions 4619 to 4630 (VAPPPSPSLPAK) match the SH3-binding motif. Ser-4624 carries the post-translational modification Phosphoserine. A compositionally biased stretch (low complexity) spans 4627-4636 (LPAKASKRSS). Thr-4637 is modified (phosphothreonine). Ser-4658 bears the Phosphoserine mark.

The protein belongs to the LDLR family. As to quaternary structure, binds plasminogen, extracellular matrix components, plasminogen activator-plasminogen activator inhibitor type I complex, apolipoprotein E-enriched beta-VLDL, lipoprotein lipase, lactoferrin, CLU/clusterin and calcium. Forms a multimeric complex together with LRPAP1. Interacts (via PxLPxI/L motif) with ANKRA2 (via ankyrin repeats). Interacts with LRP2BP. Interacts (via NPXY motif) with DAB2; the interaction is not affected by tyrosine phosphorylation of the NPXY motif. Interacts with MB. Interacts with BMP4. Interacts with the Sonic hedgehog protein N-product which is the active product of SHH. Interacts with CST3 in a calcium-dependent manner. Interacts with the vitamin-D binding protein GC/DBP. Interacts with sex hormone-binding protein SHBG. Interacts with angiotensin-2. Also interacts with angiotensin 1-7. Interacts with APOM. Interacts with selenoprotein SEPP1. Interacts with LEP. Interacts with ALB. Interacts with the antiapoptotic protein BIRC5/survivin. Interacts with matrix metalloproteinase MMP2 in complex with metalloproteinase inhibitor TIMP1. In neurons, forms a trimeric complex with APP and APPB1/FE65. Interacts with LDLRAP1/ARH; mediates trafficking of LRP2 to the endocytic recycling compartment. Does not interact with beta-amyloid protein 40 alone but interacts with the complex composed of beta-amyloid protein 40 and CLU/APOJ. Interacts with MDK. In terms of processing, a fraction undergoes proteolytic cleavage of the extracellular domain at the cell membrane to generate a cytoplasmic tail fragment. This is internalized into the early endosome from where it trafficks in an LDLRAP1/ARH-dependent manner to the endocytic recycling compartment (ERC). In the ERC, it is further cleaved by gamma-secretase to release a fragment which translocates to the nucleus and mediates transcriptional repression. N-glycosylation is required for ligand binding. Contains core-fucosylated N-glycans in kidney proximal convoluted tubules (PCTs) and hybrid-type N-glycans in proximal straight tubules (PSTs). Interacts with ligands in a glycoform-dependent manner. Retinol-binding protein and the vitamin D carrier GC/DBP are endocytosed primarily by PCTs, albumin is endocytosed equally by PCTs and PSTs, and the aminoglycoside kanamycin is endocytosed primarily by PSTs. As to expression, in the inner ear, strongly expressed in the marginal cells of the stria vascularis (at protein level). In the female reproductive tract, expressed on the luminal side of the uterine epithelium (at protein level). In the adult brain, expressed in ependymal cells of the lateral ventricles where expression is restricted to the ependyma that faces the stem cell niche (at protein level). Expressed in neurons throughout the brain including in the hippocampus, limbic cortices and cerebellum (at protein level). In the developing optic nerve, expressed exclusively in astrocytes at 14.5 dpc, 16.5 dpc and 18.5 dpc (at protein level).

It is found in the apical cell membrane. Its subcellular location is the endosome lumen. The protein resides in the membrane. It localises to the coated pit. The protein localises to the cell projection. It is found in the dendrite. Its subcellular location is the axon. Multiligand endocytic receptor. Acts together with CUBN to mediate endocytosis of high-density lipoproteins. Mediates receptor-mediated uptake of polybasic drugs such as aprotinin, aminoglycosides and polymyxin B. In the kidney, mediates the tubular uptake and clearance of leptin. Also mediates transport of leptin across the blood-brain barrier through endocytosis at the choroid plexus epithelium. Endocytosis of leptin in neuronal cells is required for hypothalamic leptin signaling and leptin-mediated regulation of feeding and body weight. Mediates endocytosis and subsequent lysosomal degradation of CST3 in kidney proximal tubule cells. Mediates renal uptake of 25-hydroxyvitamin D3 in complex with the vitamin D3 transporter GC/DBP. Mediates renal uptake of metallothionein-bound heavy metals. Together with CUBN, mediates renal reabsorption of myoglobin. Mediates renal uptake and subsequent lysosomal degradation of APOM. Plays a role in kidney selenium homeostasis by mediating renal endocytosis of selenoprotein SEPP1. Mediates renal uptake of the antiapoptotic protein BIRC5/survivin which may be important for functional integrity of the kidney. Mediates renal uptake of matrix metalloproteinase MMP2 in complex with metalloproteinase inhibitor TIMP1. Mediates endocytosis of Sonic hedgehog protein N-product (ShhN), the active product of SHH. Also mediates ShhN transcytosis. In the embryonic neuroepithelium, mediates endocytic uptake and degradation of BMP4, is required for correct SHH localization in the ventral neural tube and plays a role in patterning of the ventral telencephalon. Required at the onset of neurulation to sequester SHH on the apical surface of neuroepithelial cells of the rostral diencephalon ventral midline and to control PTCH1-dependent uptake and intracellular trafficking of SHH. During neurulation, required in neuroepithelial cells for uptake of folate bound to the folate receptor FOLR1 which is necessary for neural tube closure. In the adult brain, negatively regulates BMP signaling in the subependymal zone which enables neurogenesis to proceed. In astrocytes, mediates endocytosis of ALB which is required for the synthesis of the neurotrophic factor oleic acid. Involved in neurite branching. During optic nerve development, required for SHH-mediated migration and proliferation of oligodendrocyte precursor cells. Mediates endocytic uptake and clearance of SHH in the retinal margin which protects retinal progenitor cells from mitogenic stimuli and keeps them quiescent. Plays a role in reproductive organ development by mediating uptake in reproductive tissues of androgen and estrogen bound to the sex hormone binding protein SHBG. Mediates endocytosis of angiotensin-2. Also mediates endocytosis of angiotensin 1-7. Binds to the complex composed of beta-amyloid protein 40 and CLU/APOJ and mediates its endocytosis and lysosomal degradation. Required for embryonic heart development. Required for normal hearing, possibly through interaction with estrogen in the inner ear. The sequence is that of Low-density lipoprotein receptor-related protein 2 (Lrp2) from Mus musculus (Mouse).